The sequence spans 355 residues: tRNA-specific 2-thiouridylase MnmA (355 aa).

ATP contacts are provided by residues 6-13 and L33; that span reads LLSGGVDS. C100 functions as the Nucleophile in the catalytic mechanism. A disulfide bridge connects residues C100 and C195. G123 is an ATP binding site. An interaction with tRNA region spans residues 145–147; that stretch reads KDQ. Residue C195 is the Cysteine persulfide intermediate of the active site.

Belongs to the MnmA/TRMU family.

The protein localises to the cytoplasm. The catalysed reaction is S-sulfanyl-L-cysteinyl-[protein] + uridine(34) in tRNA + AH2 + ATP = 2-thiouridine(34) in tRNA + L-cysteinyl-[protein] + A + AMP + diphosphate + H(+). Catalyzes the 2-thiolation of uridine at the wobble position (U34) of tRNA, leading to the formation of s(2)U34. In Borrelia garinii subsp. bavariensis (strain ATCC BAA-2496 / DSM 23469 / PBi) (Borreliella bavariensis), this protein is tRNA-specific 2-thiouridylase MnmA.